The sequence spans 377 residues: Uroporphyrinogen decarboxylase (377 aa).

Substrate contacts are provided by residues 40-44 (RQAGR), Asp-89, Tyr-169, Ser-224, and His-354.

Belongs to the uroporphyrinogen decarboxylase family. As to quaternary structure, homodimer.

It is found in the cytoplasm. It carries out the reaction uroporphyrinogen III + 4 H(+) = coproporphyrinogen III + 4 CO2. Its pathway is porphyrin-containing compound metabolism; protoporphyrin-IX biosynthesis; coproporphyrinogen-III from 5-aminolevulinate: step 4/4. Catalyzes the decarboxylation of four acetate groups of uroporphyrinogen-III to yield coproporphyrinogen-III. The polypeptide is Uroporphyrinogen decarboxylase (Leifsonia xyli subsp. xyli (strain CTCB07)).